Consider the following 940-residue polypeptide: Protein translocase subunit SecA (940 aa).

Residues Gln-87, 105–109 (GEGKT), and Asp-494 each bind ATP. Residues 879–940 (AQQQKKAVEG…KCHGASEASV (62 aa)) are disordered. Basic and acidic residues predominate over residues 884–898 (KAVEGRATADGKLDE). The segment covering 900 to 915 (SVAAAARPAAASRPAV) has biased composition (low complexity). Positions 921, 923, 932, and 933 each coordinate Zn(2+).

Belongs to the SecA family. Monomer and homodimer. Part of the essential Sec protein translocation apparatus which comprises SecA, SecYEG and auxiliary proteins SecDF-YajC and YidC. The cofactor is Zn(2+).

The protein localises to the cell inner membrane. Its subcellular location is the cytoplasm. It catalyses the reaction ATP + H2O + cellular proteinSide 1 = ADP + phosphate + cellular proteinSide 2.. In terms of biological role, part of the Sec protein translocase complex. Interacts with the SecYEG preprotein conducting channel. Has a central role in coupling the hydrolysis of ATP to the transfer of proteins into and across the cell membrane, serving as an ATP-driven molecular motor driving the stepwise translocation of polypeptide chains across the membrane. In Myxococcus xanthus (strain DK1622), this protein is Protein translocase subunit SecA.